A 93-amino-acid chain; its full sequence is uncharacterized protein (93 aa).

The N-terminal stretch at 1–11 (MALMVLMALVG) is a signal peptide. Cysteine 12 is lipidated: N-palmitoyl cysteine. Residue cysteine 12 is the site of S-diacylglycerol cysteine attachment.

The protein localises to the cell membrane. This is an uncharacterized protein from Escherichia coli O6:K15:H31 (strain 536 / UPEC).